A 538-amino-acid polypeptide reads, in one-letter code: Putative ABC1 protein At2g40090 (538 aa).

The signal sequence occupies residues 1 to 26 (MAARSLWRTRTKLLVVGTALCGGSGA).

Belongs to the protein kinase superfamily. ADCK protein kinase family.

This chain is Putative ABC1 protein At2g40090, found in Arabidopsis thaliana (Mouse-ear cress).